Here is a 694-residue protein sequence, read N- to C-terminus: Glycine--tRNA ligase beta subunit (694 aa).

This sequence belongs to the class-II aminoacyl-tRNA synthetase family. In terms of assembly, tetramer of two alpha and two beta subunits.

The protein localises to the cytoplasm. The catalysed reaction is tRNA(Gly) + glycine + ATP = glycyl-tRNA(Gly) + AMP + diphosphate. This is Glycine--tRNA ligase beta subunit from Shewanella denitrificans (strain OS217 / ATCC BAA-1090 / DSM 15013).